The chain runs to 940 residues: Bifunctional uridylyltransferase/uridylyl-removing enzyme (940 aa).

Positions 1-379 (MPRRLRPTRL…PGARPKRKAL (379 aa)) are uridylyltransferase. A uridylyl-removing region spans residues 380-736 (DVEGFYEDGG…GQVRPGSNAA (357 aa)). Residues 496–618 (VDEHTLRAVG…VENPERLRLL (123 aa)) enclose the HD domain. ACT domains follow at residues 737–821 (EVVI…PRRG) and 848–929 (VVEA…AARP).

The protein belongs to the GlnD family. Mg(2+) serves as cofactor.

It carries out the reaction [protein-PII]-L-tyrosine + UTP = [protein-PII]-uridylyl-L-tyrosine + diphosphate. The catalysed reaction is [protein-PII]-uridylyl-L-tyrosine + H2O = [protein-PII]-L-tyrosine + UMP + H(+). With respect to regulation, uridylyltransferase (UTase) activity is inhibited by glutamine, while glutamine activates uridylyl-removing (UR) activity. Functionally, modifies, by uridylylation and deuridylylation, the PII regulatory proteins (GlnB and homologs), in response to the nitrogen status of the cell that GlnD senses through the glutamine level. Under low glutamine levels, catalyzes the conversion of the PII proteins and UTP to PII-UMP and PPi, while under higher glutamine levels, GlnD hydrolyzes PII-UMP to PII and UMP (deuridylylation). Thus, controls uridylylation state and activity of the PII proteins, and plays an important role in the regulation of nitrogen assimilation and metabolism. In Caulobacter vibrioides (strain ATCC 19089 / CIP 103742 / CB 15) (Caulobacter crescentus), this protein is Bifunctional uridylyltransferase/uridylyl-removing enzyme.